A 102-amino-acid polypeptide reads, in one-letter code: MKNEMKIKLFSYDHRLLDQSVRKIIKSSQDSGAKVKGPIPLPTKKEIFTICRSPHVNKTSREQFERRTHQRLIILLNTTEKTKEYLKNIIIPSGVDIQITLR.

It belongs to the universal ribosomal protein uS10 family. As to quaternary structure, part of the 30S ribosomal subunit.

Functionally, involved in the binding of tRNA to the ribosomes. The polypeptide is Small ribosomal subunit protein uS10 (Malacoplasma penetrans (strain HF-2) (Mycoplasma penetrans)).